Reading from the N-terminus, the 239-residue chain is Phosphoribosylaminoimidazole-succinocarboxamide synthase (239 aa).

The protein belongs to the SAICAR synthetase family.

It carries out the reaction 5-amino-1-(5-phospho-D-ribosyl)imidazole-4-carboxylate + L-aspartate + ATP = (2S)-2-[5-amino-1-(5-phospho-beta-D-ribosyl)imidazole-4-carboxamido]succinate + ADP + phosphate + 2 H(+). The protein operates within purine metabolism; IMP biosynthesis via de novo pathway; 5-amino-1-(5-phospho-D-ribosyl)imidazole-4-carboxamide from 5-amino-1-(5-phospho-D-ribosyl)imidazole-4-carboxylate: step 1/2. The chain is Phosphoribosylaminoimidazole-succinocarboxamide synthase from Campylobacter hominis (strain ATCC BAA-381 / DSM 21671 / CCUG 45161 / LMG 19568 / NCTC 13146 / CH001A).